The chain runs to 578 residues: Proline--tRNA ligase (578 aa).

Belongs to the class-II aminoacyl-tRNA synthetase family. ProS type 1 subfamily. Homodimer.

It localises to the cytoplasm. The catalysed reaction is tRNA(Pro) + L-proline + ATP = L-prolyl-tRNA(Pro) + AMP + diphosphate. In terms of biological role, catalyzes the attachment of proline to tRNA(Pro) in a two-step reaction: proline is first activated by ATP to form Pro-AMP and then transferred to the acceptor end of tRNA(Pro). As ProRS can inadvertently accommodate and process non-cognate amino acids such as alanine and cysteine, to avoid such errors it has two additional distinct editing activities against alanine. One activity is designated as 'pretransfer' editing and involves the tRNA(Pro)-independent hydrolysis of activated Ala-AMP. The other activity is designated 'posttransfer' editing and involves deacylation of mischarged Ala-tRNA(Pro). The misacylated Cys-tRNA(Pro) is not edited by ProRS. The chain is Proline--tRNA ligase from Burkholderia cenocepacia (strain ATCC BAA-245 / DSM 16553 / LMG 16656 / NCTC 13227 / J2315 / CF5610) (Burkholderia cepacia (strain J2315)).